The sequence spans 501 residues: Pentatricopeptide repeat-containing protein At2g36730 (501 aa).

9 PPR repeats span residues 77–111 (TPST…GIKP), 112–146 (NKLT…GFDF), 147–177 (DVYV…MTER), 178–212 (NVVS…RFCP), 213–243 (DETT…VREL), 246–276 (NCRL…MVDK), 277–312 (NVWT…SVRP), 313–343 (NYVT…MEKI), and 349–379 (MMIH…MPFE). The tract at residues 384–462 (VWRTLLSACS…IAGESCLELG (79 aa)) is type E motif. Residues 463 to 493 (GSFHRFFSGYDPRSEYVSIYELLDLFKFQLT) form a type E(+) motif region.

Belongs to the PPR family. PCMP-E subfamily.

This Arabidopsis thaliana (Mouse-ear cress) protein is Pentatricopeptide repeat-containing protein At2g36730 (PCMP-E44).